The sequence spans 464 residues: 26S proteasome regulatory subunit 7 homolog B (464 aa).

246–253 contacts ATP; sequence GPPGSGKT. Lysine 452 participates in a covalent cross-link: Glycyl lysine isopeptide (Lys-Gly) (interchain with G-Cter in ubiquitin).

The protein belongs to the AAA ATPase family. As to quaternary structure, component of the 19S regulatory particle (RP/PA700) base subcomplex of the 26S proteasome. The 26S proteasome is composed of a core protease (CP), known as the 20S proteasome, capped at one or both ends by the 19S regulatory particle (RP/PA700). The RP/PA700 complex is composed of at least 17 different subunits in two subcomplexes, the base and the lid, which form the portions proximal and distal to the 20S proteolytic core, respectively.

It localises to the cytoplasm. The protein localises to the nucleus. The 26S proteasome is involved in the ATP-dependent degradation of ubiquitinated proteins. The regulatory (or ATPase) complex confers ATP dependency and substrate specificity to the 26S complex. The chain is 26S proteasome regulatory subunit 7 homolog B (RPT1B) from Arabidopsis thaliana (Mouse-ear cress).